The chain runs to 165 residues: MKSILRSTTRNLITSSRRFENLKTTEEIRNFLAESTWSINELLKSPTGSSQPEVSPEIVKKMLKLSGLNDLKDDQSVTKALNLQMMFINHLYDNDHETVTPSPKRNENNGIFRLLASDHLPQRPLELNDLLKQINELKPDPSKGEVDFTISDLQRDSFVINKRKE.

Residues 1–19 (MKSILRSTTRNLITSSRRF) constitute a mitochondrion transit peptide.

Belongs to the GatF family. Subunit of the heterotrimeric GatFAB amidotransferase (AdT) complex, composed of A, B and F subunits.

It localises to the mitochondrion inner membrane. It carries out the reaction L-glutamyl-tRNA(Gln) + L-glutamine + ATP + H2O = L-glutaminyl-tRNA(Gln) + L-glutamate + ADP + phosphate + H(+). Functionally, allows the formation of correctly charged Gln-tRNA(Gln) through the transamidation of misacylated Glu-tRNA(Gln) in the mitochondria. The reaction takes place in the presence of glutamine and ATP through an activated gamma-phospho-Glu-tRNA(Gln). Required for proper protein synthesis within the mitochondrion. The chain is Glutamyl-tRNA(Gln) amidotransferase subunit F, mitochondrial from Candida albicans (strain WO-1) (Yeast).